Reading from the N-terminus, the 215-residue chain is UPF0502 protein PputGB1_3531 (215 aa).

This sequence belongs to the UPF0502 family.

This chain is UPF0502 protein PputGB1_3531, found in Pseudomonas putida (strain GB-1).